The primary structure comprises 316 residues: Probable cell division protein WhiA (316 aa).

A DNA-binding region (H-T-H motif) is located at residues 275-309 (TLKELGEMVSGGKISKSGINHRLRKIDEIAEKLRA).

It belongs to the WhiA family.

Its function is as follows. Involved in cell division and chromosome segregation. The protein is Probable cell division protein WhiA of Bacillus mycoides (strain KBAB4) (Bacillus weihenstephanensis).